A 144-amino-acid chain; its full sequence is Transcriptional regulator SlyA (144 aa).

Residues 2–135 (ESPLGSDLAR…LIKLVAKLEH (134 aa)) enclose the HTH marR-type domain. A DNA-binding region (H-T-H motif) is located at residues 49–72 (QIQLAKAIGIEQPSLVRTLDQLED).

The protein belongs to the SlyA family. As to quaternary structure, homodimer.

Its function is as follows. Transcription regulator that can specifically activate or repress expression of target genes. Required to activate expression of virulent genes. This is Transcriptional regulator SlyA from Salmonella choleraesuis (strain SC-B67).